Here is a 517-residue protein sequence, read N- to C-terminus: Probable anion transporter 6, chloroplastic (517 aa).

The tract at residues 51 to 73 (TERVRESKKLPPKDPIEDPKPQL) is disordered. Residues 52–70 (ERVRESKKLPPKDPIEDPK) are compositionally biased toward basic and acidic residues. A run of 10 helical transmembrane segments spans residues 130–150 (FGWS…GYAL), 170–190 (IGVF…GFMP), 229–249 (FVFG…PPII), 255–275 (ESVF…FQFL), 312–332 (SFFQ…GSWG), 352–372 (LTEA…VTSL), 397–417 (IAFV…GLPP), 420–440 (IVGI…GLYC), 452–472 (ILLG…VALT), and 484–504 (MSLF…WLAF).

This sequence belongs to the major facilitator superfamily. Sodium/anion cotransporter (TC 2.A.1.14) family. In terms of tissue distribution, expressed in leaf veins and sepals.

The protein localises to the plastid. It localises to the chloroplast membrane. Inorganic phosphate and probable anion transporter. This Arabidopsis thaliana (Mouse-ear cress) protein is Probable anion transporter 6, chloroplastic (ANTR6).